Here is a 1377-residue protein sequence, read N- to C-terminus: DNA-directed RNA polymerase subunit beta' (1377 aa).

Zn(2+)-binding residues include cysteine 60, cysteine 62, cysteine 75, and cysteine 78. Mg(2+)-binding residues include aspartate 449, aspartate 451, and aspartate 453. Cysteine 777, cysteine 851, cysteine 858, and cysteine 861 together coordinate Zn(2+).

Belongs to the RNA polymerase beta' chain family. The RNAP catalytic core consists of 2 alpha, 1 beta, 1 beta' and 1 omega subunit. When a sigma factor is associated with the core the holoenzyme is formed, which can initiate transcription. Mg(2+) is required as a cofactor. The cofactor is Zn(2+).

It catalyses the reaction RNA(n) + a ribonucleoside 5'-triphosphate = RNA(n+1) + diphosphate. Functionally, DNA-dependent RNA polymerase catalyzes the transcription of DNA into RNA using the four ribonucleoside triphosphates as substrates. This chain is DNA-directed RNA polymerase subunit beta', found in Borrelia hermsii (strain HS1 / DAH).